A 611-amino-acid polypeptide reads, in one-letter code: DNA mismatch repair protein MutL (611 aa).

Belongs to the DNA mismatch repair MutL/HexB family.

Its function is as follows. This protein is involved in the repair of mismatches in DNA. It is required for dam-dependent methyl-directed DNA mismatch repair. May act as a 'molecular matchmaker', a protein that promotes the formation of a stable complex between two or more DNA-binding proteins in an ATP-dependent manner without itself being part of a final effector complex. This chain is DNA mismatch repair protein MutL, found in Borrelia garinii subsp. bavariensis (strain ATCC BAA-2496 / DSM 23469 / PBi) (Borreliella bavariensis).